The primary structure comprises 538 residues: Chaperonin GroEL (538 aa).

Residues 29-32 (TIGP), 86-90 (DGTTT), Gly-413, 476-478 (NAA), and Asp-492 contribute to the ATP site.

The protein belongs to the chaperonin (HSP60) family. Forms a cylinder of 14 subunits composed of two heptameric rings stacked back-to-back. Interacts with the co-chaperonin GroES.

The protein localises to the cytoplasm. It catalyses the reaction ATP + H2O + a folded polypeptide = ADP + phosphate + an unfolded polypeptide.. In terms of biological role, together with its co-chaperonin GroES, plays an essential role in assisting protein folding. The GroEL-GroES system forms a nano-cage that allows encapsulation of the non-native substrate proteins and provides a physical environment optimized to promote and accelerate protein folding. This Staphylococcus aureus (strain MRSA252) protein is Chaperonin GroEL.